The chain runs to 444 residues: Methylenetetrahydrofolate--tRNA-(uracil-5-)-methyltransferase TrmFO (444 aa).

10–15 is a binding site for FAD; sequence GAGLAG.

This sequence belongs to the MnmG family. TrmFO subfamily. FAD serves as cofactor.

Its subcellular location is the cytoplasm. The enzyme catalyses uridine(54) in tRNA + (6R)-5,10-methylene-5,6,7,8-tetrahydrofolate + NADH + H(+) = 5-methyluridine(54) in tRNA + (6S)-5,6,7,8-tetrahydrofolate + NAD(+). The catalysed reaction is uridine(54) in tRNA + (6R)-5,10-methylene-5,6,7,8-tetrahydrofolate + NADPH + H(+) = 5-methyluridine(54) in tRNA + (6S)-5,6,7,8-tetrahydrofolate + NADP(+). Its function is as follows. Catalyzes the folate-dependent formation of 5-methyl-uridine at position 54 (M-5-U54) in all tRNAs. This chain is Methylenetetrahydrofolate--tRNA-(uracil-5-)-methyltransferase TrmFO, found in Streptococcus agalactiae serotype Ia (strain ATCC 27591 / A909 / CDC SS700).